Here is a 465-residue protein sequence, read N- to C-terminus: MSNTIQPEALTFECETGNYHTFCPISCVSWLYQKIEDSFFLVIGTKTCGYFLQNAMGVMIFAEPRYAMAELEEGDISAKLNDYNELKRLCLQIKRDRNPSVIVWIGTCTTEIIKMDLEGLAPKLESEIGIPIVVARANGLDYAFTQGEDTVLAAMAARCPKQVLEVEKEAKNGIQKLLSFGRKKEEVAAEKSEYVNHPPLILFGSLPDPVVTQLTLELKKQGIKVSGWLPAKHYTELPVIEEGYYVAGVNPFLSRTATTLMRRRKCKLIGAPFPIGPDGSKAWIEKICSVFGIEPQGLVEREEQIWNNLEDYIQLIRGKSVFFMGDNLLEISLARFLIRCGMTCPEIGIPYMDKRYQKAELEMLEKTCQEMGVRLPKIIEKPDNYNQIQRIYELQPDLVITGMAHANPLEARGINTKWSVEFTFAQIHGFTNARDILELVTRPLRRNNALKDLGWDKLVKEEAKV.

The [4Fe-4S] cluster site is built by C23, C48, and C108.

It belongs to the BchN/ChlN family. As to quaternary structure, protochlorophyllide reductase is composed of three subunits; ChlL, ChlN and ChlB. Forms a heterotetramer of two ChlB and two ChlN subunits. Requires [4Fe-4S] cluster as cofactor.

It catalyses the reaction chlorophyllide a + oxidized 2[4Fe-4S]-[ferredoxin] + 2 ADP + 2 phosphate = protochlorophyllide a + reduced 2[4Fe-4S]-[ferredoxin] + 2 ATP + 2 H2O. The protein operates within porphyrin-containing compound metabolism; chlorophyll biosynthesis (light-independent). Component of the dark-operative protochlorophyllide reductase (DPOR) that uses Mg-ATP and reduced ferredoxin to reduce ring D of protochlorophyllide (Pchlide) to form chlorophyllide a (Chlide). This reaction is light-independent. The NB-protein (ChlN-ChlB) is the catalytic component of the complex. In Trichodesmium erythraeum (strain IMS101), this protein is Light-independent protochlorophyllide reductase subunit N.